The primary structure comprises 403 residues: Phosphomevalonate dehydratase large subunit (403 aa).

Residues G48, V49, S50, N79, and P80 each coordinate (R)-5-phosphomevalonate. [4Fe-4S] cluster is bound at residue C119. Residues E138 and S139 each contribute to the (R)-5-phosphomevalonate site. Positions 301 and 358 each coordinate [4Fe-4S] cluster. K378 contacts (R)-5-phosphomevalonate.

The protein belongs to the AcnX type II large subunit family. As to quaternary structure, heterodimer composed of a large subunit (PMDh-L) and a small subunit (PMDh-S). Requires [4Fe-4S] cluster as cofactor.

The enzyme catalyses (R)-5-phosphomevalonate = (2E)-3-methyl-5-phosphooxypent-2-enoate + H2O. The protein operates within isoprenoid biosynthesis; isopentenyl diphosphate biosynthesis via mevalonate pathway. Its function is as follows. Component of a hydro-lyase that catalyzes the dehydration of mevalonate 5-phosphate (MVA5P) to form trans-anhydromevalonate 5-phosphate (tAHMP). Involved in the archaeal mevalonate (MVA) pathway, which provides fundamental precursors for isoprenoid biosynthesis, such as isopentenyl diphosphate (IPP) and dimethylallyl diphosphate (DMAPP). The chain is Phosphomevalonate dehydratase large subunit from Methanocaldococcus jannaschii (strain ATCC 43067 / DSM 2661 / JAL-1 / JCM 10045 / NBRC 100440) (Methanococcus jannaschii).